A 282-amino-acid polypeptide reads, in one-letter code: Bifunctional protein FolD (282 aa).

NADP(+) contacts are provided by residues 164-166 (GRS) and S189.

This sequence belongs to the tetrahydrofolate dehydrogenase/cyclohydrolase family. Homodimer.

The catalysed reaction is (6R)-5,10-methylene-5,6,7,8-tetrahydrofolate + NADP(+) = (6R)-5,10-methenyltetrahydrofolate + NADPH. It catalyses the reaction (6R)-5,10-methenyltetrahydrofolate + H2O = (6R)-10-formyltetrahydrofolate + H(+). The protein operates within one-carbon metabolism; tetrahydrofolate interconversion. Functionally, catalyzes the oxidation of 5,10-methylenetetrahydrofolate to 5,10-methenyltetrahydrofolate and then the hydrolysis of 5,10-methenyltetrahydrofolate to 10-formyltetrahydrofolate. The protein is Bifunctional protein FolD of Streptococcus suis (strain 05ZYH33).